A 187-amino-acid chain; its full sequence is Transcriptional activator of sulfur metabolism MET28 (187 aa).

The region spanning 105 to 168 is the bZIP domain; sequence DKIKQERRRK…EFWKAKLNDI (64 aa). The tract at residues 106-136 is basic motif; the sequence is KIKQERRRKNTEASQRFRIRKKQKNFENMNK. The segment at 137 to 151 is leucine-zipper; it reads LQNLNTQINKLRDRI.

The protein belongs to the bZIP family. In terms of assembly, interacts with MET4 to form a heteromeric complex which also includes CBF1. Forms two alternate complexes associating MET28 with MET4 and either MET31 or MET32. Binds to DNA through the MET4-MET28-CBF1 complex.

The protein localises to the cytoplasm. It localises to the nucleus. Functionally, acts as an accessory factor in the activation of sulfur amino acids metabolism genes. Possesses no intrinsic transcription activation abilities. Binds to the MET16 promoter as a complex with MET4 and CBF1. Enhances the DNA-binding activity of CBF1. The protein is Transcriptional activator of sulfur metabolism MET28 (MET28) of Saccharomyces cerevisiae (strain ATCC 204508 / S288c) (Baker's yeast).